The sequence spans 186 residues: Ribosome-recycling factor (186 aa).

The protein belongs to the RRF family.

Its subcellular location is the cytoplasm. Responsible for the release of ribosomes from messenger RNA at the termination of protein biosynthesis. May increase the efficiency of translation by recycling ribosomes from one round of translation to another. The polypeptide is Ribosome-recycling factor (Cupriavidus necator (strain ATCC 17699 / DSM 428 / KCTC 22496 / NCIMB 10442 / H16 / Stanier 337) (Ralstonia eutropha)).